The chain runs to 562 residues: Probable malate:quinone oxidoreductase (562 aa).

The interval 530–562 is disordered; sequence EVPDKSATPPDPTIAPKHQHSPTHNANSEMQAL. Positions 551-562 are enriched in polar residues; sequence PTHNANSEMQAL.

The protein belongs to the MQO family. FAD is required as a cofactor.

It catalyses the reaction (S)-malate + a quinone = a quinol + oxaloacetate. Its pathway is carbohydrate metabolism; tricarboxylic acid cycle; oxaloacetate from (S)-malate (quinone route): step 1/1. The sequence is that of Probable malate:quinone oxidoreductase from Xylella fastidiosa (strain 9a5c).